Here is a 274-residue protein sequence, read N- to C-terminus: Thiamine kinase (274 aa).

This sequence belongs to the thiamine kinase family.

It carries out the reaction thiamine + ATP = thiamine phosphate + ADP + H(+). The protein operates within cofactor biosynthesis; thiamine diphosphate biosynthesis; thiamine phosphate from thiamine: step 1/1. Functionally, catalyzes the ATP-dependent phosphorylation of thiamine to thiamine phosphate. Is involved in thiamine salvage. This is Thiamine kinase from Escherichia coli O157:H7 (strain EC4115 / EHEC).